The following is a 496-amino-acid chain: Hexokinase-1 (496 aa).

The helical transmembrane segment at 4–24 (VAVGATVVCTAAVCAVAVLVV) threads the bilayer. One can recognise a Hexokinase domain in the interval 35 to 487 (GRVLAILKAF…SGIGAALLAA (453 aa)). The segment at 90 to 228 (SGDEKGLFYA…GLDMRIAALV (139 aa)) is hexokinase small subdomain. Residues glycine 104, threonine 105, and asparagine 106 each coordinate ADP. The D-glucose site is built by threonine 194, lysine 195, asparagine 229, and aspartate 230. Residues 229–476 (NDTVGTLAGG…GSVEVTHSND (248 aa)) are hexokinase large subdomain. An ADP-binding site is contributed by threonine 253. Asparagine 256, glutamate 284, and glutamate 315 together coordinate D-glucose. Glycine 441 serves as a coordination point for ADP.

Belongs to the hexokinase family. In terms of assembly, interacts with RPT5B in nucleus. Interacts with RHIP1. Interacts with KING1 in mitochondria. Interacts with CLF (via SANT domain) and EZA1/SWN (via SANT domain) in nucleus. Highly expressed in flowers and siliques, at intermediate levels in roots and stems, and at lower levels in rosette and cauline leaves.

The protein localises to the mitochondrion outer membrane. The protein resides in the nucleus. It catalyses the reaction a D-hexose + ATP = a D-hexose 6-phosphate + ADP + H(+). The enzyme catalyses D-fructose + ATP = D-fructose 6-phosphate + ADP + H(+). It carries out the reaction D-glucose + ATP = D-glucose 6-phosphate + ADP + H(+). It participates in carbohydrate metabolism; hexose metabolism. It functions in the pathway carbohydrate degradation; glycolysis; D-glyceraldehyde 3-phosphate and glycerone phosphate from D-glucose: step 1/4. In terms of biological role, fructose and glucose phosphorylating enzyme. May be involved in the phosphorylation of glucose during the export from mitochondrion to cytosol. Acts as a sugar sensor which may regulate sugar-dependent gene repression or activation. Mediates the effects of sugar on plant growth and development independently of its catalytic activity or the sugar metabolism. May regulate the execution of program cell death in plant cells. Promotes roots and leaves growth. Together with sugar, is involved in the regulation of the expression of aquaporin genes, and reduces leaf water conductance, to coordinate sugar levels with the loss of water through transpiration. Regulates cell proliferation and expansion early during leaf development. Involved in sucrose-induced leaf growth stimulation independently of GPT2. May participate to the stimulation of hypocotyl elongation under long-day (LD) conditions. Forms a nuclear complex with CLF and EZA1/SWN to target common glucose-responsive genes and regulate glucose signaling. Is required for CLF- and EZA1/SWN-mediated histone H3 trimethylation on 'Lys-27' (H3K27me3) and glucose-mediated gene repression. The sequence is that of Hexokinase-1 from Arabidopsis thaliana (Mouse-ear cress).